Consider the following 166-residue polypeptide: Phospholipase A2 inhibitor (166 aa).

A signal peptide spans 1-19 (MRLILLSGLLLLGIFLANG). The C-type lectin domain occupies 46–161 (LRGAFLTVYK…CDDNLLVVCE (116 aa)). N-linked (GlcNAc...) asparagine glycans are attached at residues N61 and N122. Cystine bridges form between C83-C160 and C138-C152.

Belongs to the alpha-type phospholipase A2 inhibitor family. Homotrimer; non-covalently linked. As to expression, expressed by the liver.

Its subcellular location is the secreted. Its function is as follows. This phospholipase A2 inhibitor binds directly phospholipase A2 in the presence or absence of calcium. The protein is Phospholipase A2 inhibitor of Bothrops alternatus (Urutu).